A 409-amino-acid chain; its full sequence is tRNA(Met) cytidine acetate ligase (409 aa).

ATP is bound by residues 7-20, Gly-102, Asn-169, and Arg-194; that span reads VVEYNPMHNGHLYH.

The protein belongs to the TmcAL family.

The protein resides in the cytoplasm. It carries out the reaction cytidine(34) in elongator tRNA(Met) + acetate + ATP = N(4)-acetylcytidine(34) in elongator tRNA(Met) + AMP + diphosphate. Catalyzes the formation of N(4)-acetylcytidine (ac(4)C) at the wobble position of elongator tRNA(Met), using acetate and ATP as substrates. First activates an acetate ion to form acetyladenylate (Ac-AMP) and then transfers the acetyl group to tRNA to form ac(4)C34. The polypeptide is tRNA(Met) cytidine acetate ligase (Clostridium botulinum (strain Kyoto / Type A2)).